Here is a 260-residue protein sequence, read N- to C-terminus: Thrombin-like enzyme flavoxobin (260 aa).

A signal peptide spans 1 to 18 (MVLIRVLANLLILQLSYA). The propeptide occupies 19-24 (QKSSEL). Positions 25–251 (VIGGDECNIN…YNAWIQSIIA (227 aa)) constitute a Peptidase S1 domain. 6 disulfide bridges follow: Cys31/Cys165, Cys52/Cys68, Cys100/Cys258, Cys144/Cys212, Cys176/Cys191, and Cys202/Cys227. Catalysis depends on charge relay system residues His67 and Asp112. Ser206 acts as the Charge relay system in catalysis.

Belongs to the peptidase S1 family. Snake venom subfamily. Monomer. As to expression, expressed by the venom gland.

The protein resides in the secreted. It catalyses the reaction Selective cleavage of Arg-|-Xaa bond in fibrinogen, to form fibrin, and release fibrinopeptide A. The specificity of further degradation of fibrinogen varies with species origin of the enzyme.. Inhibited by alpha(2)-macroglobulin, diisopropylfluorophosphate (DFP) and PMSF. Low inhibition by tosyl-L-lysine chloromethyl ketone. Its function is as follows. Thrombin-like snake venom serine protease that clots fibrinogen (FGA) by releasing fibrinopeptide A. According to PubMed:8585090, only cleaves rabbit fibrinogen, whereas no specificity is described in PubMed:3910643 (tests done on bovine fibrinogen). Also acts as a C3 convertase that independently cleaves human C3 and kick-starts the complement cascade. Also increases urokinase-type plasminogen activator (PLAU) and plasminogen activator inhibitor (SERPINE1) in cultured bovine pulmonary artery endothelial cells. Dose-dependently inhibits collagen-induced platelet aggregation. This Protobothrops flavoviridis (Habu) protein is Thrombin-like enzyme flavoxobin (TLF1).